We begin with the raw amino-acid sequence, 269 residues long: MSFDGKQLAHEILLTYKNRDWSQVKLVILQTNNDVSSDAFIRQKMNACNTLGAQSELIKYHESVTEKELLEKIQQLNTDPEVTGIILQLPVYPHLKQNKLLKAIDPYKDVDYLTGNCPLPIRSCVVEAVLILKEHFHHDFTNKQIVVVGLGVTGGGPIFHYLKETGHQVVGCDKHTPNTMELIKTADVVITAIGKPHFFKTTNFKPGVILYDVGVSRNVLNKLCGDIDPNGIEKVAKWWSPTPGGVGPFTVLAIMKNLWVLYEAHQRRI.

NADP(+) is bound by residues 149–151 and Val215; that span reads GLG.

This sequence belongs to the tetrahydrofolate dehydrogenase/cyclohydrolase family. In terms of assembly, homodimer.

It catalyses the reaction (6R)-5,10-methylene-5,6,7,8-tetrahydrofolate + NADP(+) = (6R)-5,10-methenyltetrahydrofolate + NADPH. The enzyme catalyses (6R)-5,10-methenyltetrahydrofolate + H2O = (6R)-10-formyltetrahydrofolate + H(+). It participates in one-carbon metabolism; tetrahydrofolate interconversion. In terms of biological role, catalyzes the oxidation of 5,10-methylenetetrahydrofolate to 5,10-methenyltetrahydrofolate and then the hydrolysis of 5,10-methenyltetrahydrofolate to 10-formyltetrahydrofolate. The sequence is that of Bifunctional protein FolD from Mycoplasma pneumoniae (strain ATCC 29342 / M129 / Subtype 1) (Mycoplasmoides pneumoniae).